A 161-amino-acid chain; its full sequence is 6,7-dimethyl-8-ribityllumazine synthase (161 aa).

5-amino-6-(D-ribitylamino)uracil is bound by residues Phe-23, 61–63, and 85–87; these read SFE and AVI. (2S)-2-hydroxy-3-oxobutyl phosphate is bound at residue 90 to 91; the sequence is DT. Catalysis depends on His-93, which acts as the Proton donor. Phe-118 serves as a coordination point for 5-amino-6-(D-ribitylamino)uracil. Position 132 (Arg-132) interacts with (2S)-2-hydroxy-3-oxobutyl phosphate.

It belongs to the DMRL synthase family.

It catalyses the reaction (2S)-2-hydroxy-3-oxobutyl phosphate + 5-amino-6-(D-ribitylamino)uracil = 6,7-dimethyl-8-(1-D-ribityl)lumazine + phosphate + 2 H2O + H(+). It participates in cofactor biosynthesis; riboflavin biosynthesis; riboflavin from 2-hydroxy-3-oxobutyl phosphate and 5-amino-6-(D-ribitylamino)uracil: step 1/2. Its function is as follows. Catalyzes the formation of 6,7-dimethyl-8-ribityllumazine by condensation of 5-amino-6-(D-ribitylamino)uracil with 3,4-dihydroxy-2-butanone 4-phosphate. This is the penultimate step in the biosynthesis of riboflavin. This is 6,7-dimethyl-8-ribityllumazine synthase from Synechococcus sp. (strain WH7803).